Here is a 235-residue protein sequence, read N- to C-terminus: Orotidine 5'-phosphate decarboxylase (235 aa).

Substrate-binding positions include Asp-12, Lys-34, 61–70 (DMKLLDIDNT), Thr-116, Arg-177, Gln-186, Gly-206, and Arg-207. The Proton donor role is filled by Lys-63.

This sequence belongs to the OMP decarboxylase family. Type 1 subfamily. As to quaternary structure, homodimer.

It catalyses the reaction orotidine 5'-phosphate + H(+) = UMP + CO2. It participates in pyrimidine metabolism; UMP biosynthesis via de novo pathway; UMP from orotate: step 2/2. Catalyzes the decarboxylation of orotidine 5'-monophosphate (OMP) to uridine 5'-monophosphate (UMP). This is Orotidine 5'-phosphate decarboxylase from Rhizobium etli (strain ATCC 51251 / DSM 11541 / JCM 21823 / NBRC 15573 / CFN 42).